A 697-amino-acid chain; its full sequence is Potassium-transporting ATPase ATP-binding subunit (697 aa).

4 helical membrane-spanning segments follow: residues 55–75 (PIMF…FLPS), 82–102 (GWFN…ANFA), 245–265 (LTLI…YLGF), and 271–291 (VLVA…LSAI). D324 serves as the catalytic 4-aspartylphosphate intermediate. ATP-binding positions include D361, E365, 393–400 (FKAETRMS), and K412. Residues D535 and D539 each contribute to the Mg(2+) site. The next 3 helical transmembrane spans lie at 605–625 (FAII…LNIM), 633–653 (AILS…PLAM), and 677–697 (GGVI…GLFI).

The protein belongs to the cation transport ATPase (P-type) (TC 3.A.3) family. Type IA subfamily. The system is composed of three essential subunits: KdpA, KdpB and KdpC.

It is found in the cell membrane. The enzyme catalyses K(+)(out) + ATP + H2O = K(+)(in) + ADP + phosphate + H(+). In terms of biological role, part of the high-affinity ATP-driven potassium transport (or Kdp) system, which catalyzes the hydrolysis of ATP coupled with the electrogenic transport of potassium into the cytoplasm. This subunit is responsible for energy coupling to the transport system and for the release of the potassium ions to the cytoplasm. The polypeptide is Potassium-transporting ATPase ATP-binding subunit (Bacillus mycoides (strain KBAB4) (Bacillus weihenstephanensis)).